We begin with the raw amino-acid sequence, 390 residues long: Trehalose-phosphate phosphatase (390 aa).

D150 (nucleophile) is an active-site residue. Mg(2+) is bound by residues D150, D152, and D333. A substrate-binding site is contributed by D150 to D152.

The protein belongs to the trehalose phosphatase family. Mg(2+) serves as cofactor.

The catalysed reaction is alpha,alpha-trehalose 6-phosphate + H2O = alpha,alpha-trehalose + phosphate. It participates in glycan biosynthesis; trehalose biosynthesis. In terms of biological role, removes the phosphate from trehalose 6-phosphate to produce free trehalose. The chain is Trehalose-phosphate phosphatase (otsB) from Mycobacterium ulcerans (strain Agy99).